Here is a 177-residue protein sequence, read N- to C-terminus: Inorganic pyrophosphatase (177 aa).

K30, R44, and Y56 together coordinate substrate. Residues D66, D71, and D103 each coordinate Mg(2+). Residue Y142 coordinates substrate.

The protein belongs to the PPase family. In terms of assembly, homohexamer. Requires Mg(2+) as cofactor.

The protein localises to the cytoplasm. The enzyme catalyses diphosphate + H2O = 2 phosphate + H(+). Functionally, catalyzes the hydrolysis of inorganic pyrophosphate (PPi) forming two phosphate ions. The protein is Inorganic pyrophosphatase of Agrobacterium fabrum (strain C58 / ATCC 33970) (Agrobacterium tumefaciens (strain C58)).